The chain runs to 80 residues: Translation initiation factor IF-1, chloroplastic (80 aa).

Positions 1-74 (MKEQKWIHEG…TRGRIIYRLR (74 aa)) constitute an S1-like domain.

Belongs to the IF-1 family. As to quaternary structure, component of the 30S ribosomal translation pre-initiation complex which assembles on the 30S ribosome in the order IF-2 and IF-3, IF-1 and N-formylmethionyl-tRNA(fMet); mRNA recruitment can occur at any time during PIC assembly.

It is found in the plastid. Its subcellular location is the chloroplast. Its function is as follows. One of the essential components for the initiation of protein synthesis. Stabilizes the binding of IF-2 and IF-3 on the 30S subunit to which N-formylmethionyl-tRNA(fMet) subsequently binds. Helps modulate mRNA selection, yielding the 30S pre-initiation complex (PIC). Upon addition of the 50S ribosomal subunit IF-1, IF-2 and IF-3 are released leaving the mature 70S translation initiation complex. In Illicium oligandrum (Star anise), this protein is Translation initiation factor IF-1, chloroplastic.